The primary structure comprises 43 residues: Protein PsbN (43 aa).

Residues 7–27 (FVVGILVALVLITAFAVYTAF) traverse the membrane as a helical segment.

The protein belongs to the PsbN family.

The protein resides in the cell inner membrane. In terms of biological role, may play a role in photosystem I and II biogenesis. This chain is Protein PsbN, found in Gloeobacter violaceus (strain ATCC 29082 / PCC 7421).